Reading from the N-terminus, the 456-residue chain is tRNA modification GTPase MnmE (456 aa).

Residues Arg24, Glu81, and Lys120 each contribute to the (6S)-5-formyl-5,6,7,8-tetrahydrofolate site. The 164-residue stretch at 216–379 folds into the TrmE-type G domain; it reads GMKVVIAGRP…LREHLKECIG (164 aa). Residue Asn226 participates in K(+) binding. Residues 226 to 231, 245 to 251, and 270 to 273 contribute to the GTP site; these read NAGKSS, TAIEGTT, and DTAG. Ser230 contributes to the Mg(2+) binding site. K(+)-binding residues include Thr245, Ile247, and Thr250. Thr251 is a binding site for Mg(2+). Lys456 lines the (6S)-5-formyl-5,6,7,8-tetrahydrofolate pocket.

It belongs to the TRAFAC class TrmE-Era-EngA-EngB-Septin-like GTPase superfamily. TrmE GTPase family. Homodimer. Heterotetramer of two MnmE and two MnmG subunits. It depends on K(+) as a cofactor.

It localises to the cytoplasm. Functionally, exhibits a very high intrinsic GTPase hydrolysis rate. Involved in the addition of a carboxymethylaminomethyl (cmnm) group at the wobble position (U34) of certain tRNAs, forming tRNA-cmnm(5)s(2)U34. The chain is tRNA modification GTPase MnmE from Marinobacter nauticus (strain ATCC 700491 / DSM 11845 / VT8) (Marinobacter aquaeolei).